Consider the following 421-residue polypeptide: Serine hydroxymethyltransferase (421 aa).

(6S)-5,6,7,8-tetrahydrofolate-binding positions include Leu118 and 122–124 (GHL). Lys226 carries the post-translational modification N6-(pyridoxal phosphate)lysine.

This sequence belongs to the SHMT family. Homodimer. Pyridoxal 5'-phosphate serves as cofactor.

Its subcellular location is the cytoplasm. It carries out the reaction (6R)-5,10-methylene-5,6,7,8-tetrahydrofolate + glycine + H2O = (6S)-5,6,7,8-tetrahydrofolate + L-serine. It functions in the pathway one-carbon metabolism; tetrahydrofolate interconversion. The protein operates within amino-acid biosynthesis; glycine biosynthesis; glycine from L-serine: step 1/1. Its function is as follows. Catalyzes the reversible interconversion of serine and glycine with tetrahydrofolate (THF) serving as the one-carbon carrier. This reaction serves as the major source of one-carbon groups required for the biosynthesis of purines, thymidylate, methionine, and other important biomolecules. Also exhibits THF-independent aldolase activity toward beta-hydroxyamino acids, producing glycine and aldehydes, via a retro-aldol mechanism. The polypeptide is Serine hydroxymethyltransferase (Mycoplasmopsis agalactiae (strain NCTC 10123 / CIP 59.7 / PG2) (Mycoplasma agalactiae)).